Consider the following 193-residue polypeptide: NADH-quinone oxidoreductase subunit B (193 aa).

[4Fe-4S] cluster-binding residues include Cys-72, Cys-73, Cys-137, and Cys-167.

Belongs to the complex I 20 kDa subunit family. In terms of assembly, NDH-1 is composed of 14 different subunits. Subunits NuoB, C, D, E, F, and G constitute the peripheral sector of the complex. It depends on [4Fe-4S] cluster as a cofactor.

Its subcellular location is the cell inner membrane. It catalyses the reaction a quinone + NADH + 5 H(+)(in) = a quinol + NAD(+) + 4 H(+)(out). Its function is as follows. NDH-1 shuttles electrons from NADH, via FMN and iron-sulfur (Fe-S) centers, to quinones in the respiratory chain. The immediate electron acceptor for the enzyme in this species is believed to be ubiquinone. Couples the redox reaction to proton translocation (for every two electrons transferred, four hydrogen ions are translocated across the cytoplasmic membrane), and thus conserves the redox energy in a proton gradient. This chain is NADH-quinone oxidoreductase subunit B, found in Bartonella henselae (strain ATCC 49882 / DSM 28221 / CCUG 30454 / Houston 1) (Rochalimaea henselae).